Consider the following 501-residue polypeptide: Glutathione gamma-glutamylcysteinyltransferase 1 (501 aa).

Residues 1–221 (MAMAGLYRRL…GFMLISRPHR (221 aa)) form the Peptidase C83 domain. Active-site residues include Cys56, His162, and Asp180.

This sequence belongs to the phytochelatin synthase family. In terms of tissue distribution, expressed in roots, nodules and leaves.

It catalyses the reaction [Glu(-Cys)](n)-Gly + glutathione + H(+) = [Glu(-Cys)](n+1)-Gly + glycine. With respect to regulation, requires cadmium for activity. Also activated in vitro by Zn(2+), Cu(2+), Fe(2+) or Fe(3+) ions, but not by Co(2+) or Ni(2+) ions. Involved in the synthesis of phytochelatins (PC) and homophytochelatins (hPC), the heavy-metal-binding peptides of plants. The sequence is that of Glutathione gamma-glutamylcysteinyltransferase 1 (PCS1) from Lotus japonicus (Lotus corniculatus var. japonicus).